The primary structure comprises 476 residues: Glutamate--tRNA ligase (476 aa).

Residues 9–19 (PSPTGLFHIGT) carry the 'HIGH' region motif. A 'KMSKS' region motif is present at residues 248-252 (KLSKR). Lysine 251 contributes to the ATP binding site.

Belongs to the class-I aminoacyl-tRNA synthetase family. Glutamate--tRNA ligase type 1 subfamily. Monomer.

It localises to the cytoplasm. The catalysed reaction is tRNA(Glu) + L-glutamate + ATP = L-glutamyl-tRNA(Glu) + AMP + diphosphate. Functionally, catalyzes the attachment of glutamate to tRNA(Glu) in a two-step reaction: glutamate is first activated by ATP to form Glu-AMP and then transferred to the acceptor end of tRNA(Glu). The sequence is that of Glutamate--tRNA ligase from Prochlorococcus marinus (strain AS9601).